The primary structure comprises 338 residues: DNA-directed RNA polymerase subunit alpha (338 aa).

Residues 1-225 form an alpha N-terminal domain (alpha-NTD) region; the sequence is MLISQRPTLT…ELFGLARELN (225 aa). Positions 242–338 are alpha C-terminal domain (alpha-CTD); the sequence is YIAAYGMPIE…YIDTDPEETE (97 aa). Positions 314 to 338 are disordered; it reads FDPTQLDGYDAATGDYIDTDPEETE.

Belongs to the RNA polymerase alpha chain family. Homodimer. The RNAP catalytic core consists of 2 alpha, 1 beta, 1 beta' and 1 omega subunit. When a sigma factor is associated with the core the holoenzyme is formed, which can initiate transcription.

The catalysed reaction is RNA(n) + a ribonucleoside 5'-triphosphate = RNA(n+1) + diphosphate. Functionally, DNA-dependent RNA polymerase catalyzes the transcription of DNA into RNA using the four ribonucleoside triphosphates as substrates. The chain is DNA-directed RNA polymerase subunit alpha from Corynebacterium diphtheriae (strain ATCC 700971 / NCTC 13129 / Biotype gravis).